Here is a 129-residue protein sequence, read N- to C-terminus: MPTYNQLVRFERKSKVRKTKSPALEANPFKSGVCLVVKTVTPKKPNSALRKVATVRLSNKRTVNVYIPGEKHSVKEHDRVLVRGGQVPDLPGVKYHVVLGAYDIAGVKGRKQGRSRYGAPRKQVVATKK.

Aspartate 89 carries the post-translational modification 3-methylthioaspartic acid. Positions 110-129 (RKQGRSRYGAPRKQVVATKK) are disordered.

The protein belongs to the universal ribosomal protein uS12 family. As to quaternary structure, part of the 30S ribosomal subunit. Contacts proteins S8 and S17. May interact with IF1 in the 30S initiation complex.

With S4 and S5 plays an important role in translational accuracy. Its function is as follows. Interacts with and stabilizes bases of the 16S rRNA that are involved in tRNA selection in the A site and with the mRNA backbone. Located at the interface of the 30S and 50S subunits, it traverses the body of the 30S subunit contacting proteins on the other side and probably holding the rRNA structure together. The combined cluster of proteins S8, S12 and S17 appears to hold together the shoulder and platform of the 30S subunit. This is Small ribosomal subunit protein uS12 from Rickettsia bellii (strain RML369-C).